The chain runs to 86 residues: Weak neurotoxin WNTX34 (86 aa).

An N-terminal signal peptide occupies residues 1–21 (MKTLLLTLVVVTIVCLDLGYS). Intrachain disulfides connect C24-C45, C27-C32, C38-C63, C67-C78, and C79-C84.

The protein belongs to the three-finger toxin family. Ancestral subfamily. Orphan group II sub-subfamily. In terms of tissue distribution, expressed by the venom gland.

The protein resides in the secreted. Functionally, binds with low affinity to muscular (alpha-1-beta-1-delta-epsilon/CHRNA1-CHRNB1-CHRND-CHRNE) and very low affinity to neuronal (alpha-7/CHRNA7) nicotinic acetylcholine receptor (nAChR). The sequence is that of Weak neurotoxin WNTX34 from Ophiophagus hannah (King cobra).